We begin with the raw amino-acid sequence, 109 residues long: Spermidine export protein MdtI (109 aa).

Transmembrane regions (helical) follow at residues 6-26 (WVHAAWLALAIVLEIVANVFL), 36-56 (IFGLLSLAAVLAAFSALSQAV), 64-84 (AYALWGGFGIAATLAAGWILF), and 88-108 (LNRKGWIGLVLLLAGMIMVKL).

It belongs to the drug/metabolite transporter (DMT) superfamily. Small multidrug resistance (SMR) (TC 2.A.7.1) family. MdtI subfamily. In terms of assembly, forms a complex with MdtJ.

It localises to the cell inner membrane. In terms of biological role, catalyzes the excretion of spermidine. The chain is Spermidine export protein MdtI from Escherichia coli O139:H28 (strain E24377A / ETEC).